Here is a 371-residue protein sequence, read N- to C-terminus: uncharacterized protein (371 aa).

This is an uncharacterized protein from Clostridium acetobutylicum (strain ATCC 824 / DSM 792 / JCM 1419 / IAM 19013 / LMG 5710 / NBRC 13948 / NRRL B-527 / VKM B-1787 / 2291 / W).